A 209-amino-acid chain; its full sequence is MAPRQQPRRIARELALLSLSQIKGKAEKLDKVELNDLTLAAIRALTSEVQDTLETASAEVKRGHNQLFQYETKATTLESAKTMIKDALTLTQEAINRLANAIEFPEIIQLASQYEVREYAIELIGTINRRRKEIDEQLEAVLKDWQLKRLAKIDQDILRLAVAEILFLDVPEKVSINEAVELAKRYSDDDGYRFINGVLRRFTDHIKHN.

The protein belongs to the NusB family.

In terms of biological role, involved in transcription antitermination. Required for transcription of ribosomal RNA (rRNA) genes. Binds specifically to the boxA antiterminator sequence of the ribosomal RNA (rrn) operons. The protein is Transcription antitermination protein NusB of Crocosphaera subtropica (strain ATCC 51142 / BH68) (Cyanothece sp. (strain ATCC 51142)).